The following is a 174-amino-acid chain: Adenine phosphoribosyltransferase (174 aa).

Belongs to the purine/pyrimidine phosphoribosyltransferase family. As to quaternary structure, homodimer.

Its subcellular location is the cytoplasm. It catalyses the reaction AMP + diphosphate = 5-phospho-alpha-D-ribose 1-diphosphate + adenine. Its pathway is purine metabolism; AMP biosynthesis via salvage pathway; AMP from adenine: step 1/1. Its function is as follows. Catalyzes a salvage reaction resulting in the formation of AMP, that is energically less costly than de novo synthesis. The protein is Adenine phosphoribosyltransferase of Agathobacter rectalis (strain ATCC 33656 / DSM 3377 / JCM 17463 / KCTC 5835 / VPI 0990) (Eubacterium rectale).